Here is a 342-residue protein sequence, read N- to C-terminus: Galactose mutarotase (342 aa).

Beta-D-galactose is bound by residues 81–82 (NR) and H107. S124 carries the post-translational modification Phosphoserine. Catalysis depends on H176, which acts as the Proton donor. Residues 176-178 (HSY), D243, Q279, and E307 contribute to the beta-D-galactose site. E307 functions as the Proton acceptor in the catalytic mechanism.

This sequence belongs to the aldose epimerase family. In terms of assembly, monomer.

The protein localises to the cytoplasm. It carries out the reaction alpha-D-galactose = beta-D-galactose. The enzyme catalyses alpha-D-glucose = beta-D-glucose. Its pathway is carbohydrate metabolism; hexose metabolism. The protein operates within carbohydrate metabolism; galactose metabolism. Functionally, mutarotase that catalyzes the interconversion of beta-D-galactose and alpha-D-galactose during galactose metabolism. Beta-D-galactose is metabolized in the liver into glucose 1-phosphate, the primary metabolic fuel, by the action of four enzymes that constitute the Leloir pathway: GALM, GALK1 (galactokinase), GALT (galactose-1-phosphate uridylyltransferase) and GALE (UDP-galactose-4'-epimerase). Involved in the maintenance of the equilibrium between the beta- and alpha-anomers of galactose, therefore ensuring a sufficient supply of the alpha-anomer for GALK1. Also active on D-glucose although shows a preference for galactose over glucose. This Bos taurus (Bovine) protein is Galactose mutarotase (GALM).